Consider the following 670-residue polypeptide: Beta-lactam-inducible penicillin-binding protein (670 aa).

The chain crosses the membrane as a helical span at residues 4-24; sequence IKIVPLILIVVVVGFGIYFYA. Residues Ser-25 and Ser-405 each contribute to the a penicillin site. The active-site Acyl-ester intermediate is the Ser-405.

The protein belongs to the transpeptidase family.

The protein resides in the cell membrane. The sequence is that of Beta-lactam-inducible penicillin-binding protein (pbp) from Staphylococcus aureus.